The chain runs to 304 residues: UDP-N-acetylenolpyruvoylglucosamine reductase (304 aa).

The region spanning 33–213 (IGGPADIMVI…LEITRDLTER (181 aa)) is the FAD-binding PCMH-type domain. Residue arginine 177 is part of the active site. The active-site Proton donor is the serine 227. The active site involves glutamate 297.

This sequence belongs to the MurB family. It depends on FAD as a cofactor.

It localises to the cytoplasm. The enzyme catalyses UDP-N-acetyl-alpha-D-muramate + NADP(+) = UDP-N-acetyl-3-O-(1-carboxyvinyl)-alpha-D-glucosamine + NADPH + H(+). Its pathway is cell wall biogenesis; peptidoglycan biosynthesis. Cell wall formation. The sequence is that of UDP-N-acetylenolpyruvoylglucosamine reductase from Alkaliphilus oremlandii (strain OhILAs) (Clostridium oremlandii (strain OhILAs)).